Here is a 588-residue protein sequence, read N- to C-terminus: Sulfite reductase [NADPH] hemoprotein beta-component (588 aa).

[4Fe-4S] cluster is bound by residues Cys442, Cys448, Cys487, and Cys491. Cys491 contributes to the siroheme binding site.

The protein belongs to the nitrite and sulfite reductase 4Fe-4S domain family. Alpha(8)-beta(8). The alpha component is a flavoprotein, the beta component is a hemoprotein. It depends on siroheme as a cofactor. Requires [4Fe-4S] cluster as cofactor.

The catalysed reaction is hydrogen sulfide + 3 NADP(+) + 3 H2O = sulfite + 3 NADPH + 4 H(+). It functions in the pathway sulfur metabolism; hydrogen sulfide biosynthesis; hydrogen sulfide from sulfite (NADPH route): step 1/1. Functionally, component of the sulfite reductase complex that catalyzes the 6-electron reduction of sulfite to sulfide. This is one of several activities required for the biosynthesis of L-cysteine from sulfate. The chain is Sulfite reductase [NADPH] hemoprotein beta-component from Actinobacillus pleuropneumoniae serotype 5b (strain L20).